The following is a 488-amino-acid chain: Cobyric acid synthase (488 aa).

Residues D250 to W438 form the GATase cobBQ-type domain. C331 serves as the catalytic Nucleophile. H430 is an active-site residue.

It belongs to the CobB/CobQ family. CobQ subfamily.

The protein operates within cofactor biosynthesis; adenosylcobalamin biosynthesis. Its function is as follows. Catalyzes amidations at positions B, D, E, and G on adenosylcobyrinic A,C-diamide. NH(2) groups are provided by glutamine, and one molecule of ATP is hydrogenolyzed for each amidation. This chain is Cobyric acid synthase, found in Trichodesmium erythraeum (strain IMS101).